An 84-amino-acid chain; its full sequence is Exodeoxyribonuclease 7 small subunit (84 aa).

The protein belongs to the XseB family. Heterooligomer composed of large and small subunits.

It localises to the cytoplasm. The enzyme catalyses Exonucleolytic cleavage in either 5'- to 3'- or 3'- to 5'-direction to yield nucleoside 5'-phosphates.. In terms of biological role, bidirectionally degrades single-stranded DNA into large acid-insoluble oligonucleotides, which are then degraded further into small acid-soluble oligonucleotides. In Bartonella bacilliformis (strain ATCC 35685 / KC583 / Herrer 020/F12,63), this protein is Exodeoxyribonuclease 7 small subunit.